We begin with the raw amino-acid sequence, 153 residues long: Glucose-6-phosphate 1-dehydrogenase (153 aa).

Residues Arg-21 and Lys-120 each coordinate NADP(+). Lys-120 contributes to the D-glucose 6-phosphate binding site.

The protein belongs to the glucose-6-phosphate dehydrogenase family.

It is found in the cytoplasm. It localises to the cytosol. The catalysed reaction is D-glucose 6-phosphate + NADP(+) = 6-phospho-D-glucono-1,5-lactone + NADPH + H(+). It functions in the pathway carbohydrate degradation; pentose phosphate pathway; D-ribulose 5-phosphate from D-glucose 6-phosphate (oxidative stage): step 1/3. Its function is as follows. Cytosolic glucose-6-phosphate dehydrogenase that catalyzes the first and rate-limiting step of the oxidative branch within the pentose phosphate pathway/shunt, an alternative route to glycolysis for the dissimilation of carbohydrates and a major source of reducing power and metabolic intermediates for fatty acid and nucleic acid biosynthetic processes. This Sarcophaga bullata (Grey flesh fly) protein is Glucose-6-phosphate 1-dehydrogenase (ZW).